A 96-amino-acid chain; its full sequence is Aspartyl/glutamyl-tRNA(Asn/Gln) amidotransferase subunit C (96 aa).

It belongs to the GatC family. Heterotrimer of A, B and C subunits.

The enzyme catalyses L-glutamyl-tRNA(Gln) + L-glutamine + ATP + H2O = L-glutaminyl-tRNA(Gln) + L-glutamate + ADP + phosphate + H(+). The catalysed reaction is L-aspartyl-tRNA(Asn) + L-glutamine + ATP + H2O = L-asparaginyl-tRNA(Asn) + L-glutamate + ADP + phosphate + 2 H(+). Its function is as follows. Allows the formation of correctly charged Asn-tRNA(Asn) or Gln-tRNA(Gln) through the transamidation of misacylated Asp-tRNA(Asn) or Glu-tRNA(Gln) in organisms which lack either or both of asparaginyl-tRNA or glutaminyl-tRNA synthetases. The reaction takes place in the presence of glutamine and ATP through an activated phospho-Asp-tRNA(Asn) or phospho-Glu-tRNA(Gln). This is Aspartyl/glutamyl-tRNA(Asn/Gln) amidotransferase subunit C from Deinococcus deserti (strain DSM 17065 / CIP 109153 / LMG 22923 / VCD115).